The following is a 433-amino-acid chain: tRNA-2-methylthio-N(6)-dimethylallyladenosine synthase (433 aa).

The region spanning 4–119 (KKLFIQTLGC…ITQAIKTPKF (116 aa)) is the MTTase N-terminal domain. Residues Cys-13, Cys-50, Cys-82, Cys-151, Cys-155, and Cys-158 each contribute to the [4Fe-4S] cluster site. Residues 137–370 (RNSIYKSYIN…QNRHSEILDE (234 aa)) form the Radical SAM core domain. The TRAM domain maps to 373–433 (KKQENKTFKV…KRMVLYGEII (61 aa)).

The protein belongs to the methylthiotransferase family. MiaB subfamily. Monomer. Requires [4Fe-4S] cluster as cofactor.

It localises to the cytoplasm. The enzyme catalyses N(6)-dimethylallyladenosine(37) in tRNA + (sulfur carrier)-SH + AH2 + 2 S-adenosyl-L-methionine = 2-methylsulfanyl-N(6)-dimethylallyladenosine(37) in tRNA + (sulfur carrier)-H + 5'-deoxyadenosine + L-methionine + A + S-adenosyl-L-homocysteine + 2 H(+). In terms of biological role, catalyzes the methylthiolation of N6-(dimethylallyl)adenosine (i(6)A), leading to the formation of 2-methylthio-N6-(dimethylallyl)adenosine (ms(2)i(6)A) at position 37 in tRNAs that read codons beginning with uridine. The chain is tRNA-2-methylthio-N(6)-dimethylallyladenosine synthase from Campylobacter jejuni subsp. doylei (strain ATCC BAA-1458 / RM4099 / 269.97).